A 93-amino-acid polypeptide reads, in one-letter code: MASFLLSILVFFLSALVLVPQGFAEYYLNPAYRPPQTEPPVHKPPHKEPPVHKPPHKDPPVNKPPQKEPPVHKPPRKEPPTHRHPPSEDNIHF.

The N-terminal stretch at 1-24 (MASFLLSILVFFLSALVLVPQGFA) is a signal peptide. The segment at 30–93 (PAYRPPQTEP…HPPSEDNIHF (64 aa)) is disordered. 10 repeat units span residues 34 to 38 (PPQTE), 39 to 43 (PPVHK), 44 to 48 (PPHKE), 49 to 53 (PPVHK), 54 to 58 (PPHKD), 59 to 63 (PPVNK), 64 to 68 (PPQKE), 69 to 73 (PPVHK), 74 to 78 (PPRKE), and 79 to 83 (PPTHR). The 10 X 5 AA tandem repeats of P-P-[HQVRT]-[HKNT]-[DEKR] stretch occupies residues 34-83 (PPQTEPPVHKPPHKEPPVHKPPHKDPPVNKPPQKEPPVHKPPRKEPPTHR). Basic and acidic residues predominate over residues 46 to 93 (HKEPPVHKPPHKDPPVNKPPQKEPPVHKPPRKEPPTHRHPPSEDNIHF).

It belongs to the plant proline-rich protein superfamily. ENOD12 family. In terms of tissue distribution, more abundant in the young nodules than the mature nodules.

It is found in the secreted. The protein localises to the cell wall. Functionally, involved in the infection process during the plant-rhizobium interaction. This chain is Early nodulin-12A (ENOD12A), found in Medicago sativa (Alfalfa).